We begin with the raw amino-acid sequence, 418 residues long: Glutamyl-tRNA reductase (418 aa).

Substrate contacts are provided by residues 49–52 (TCNR), S109, 114–116 (EPQ), and Q120. C50 acts as the Nucleophile in catalysis. 189–194 (GAGETI) is an NADP(+) binding site.

Belongs to the glutamyl-tRNA reductase family. Homodimer.

It carries out the reaction (S)-4-amino-5-oxopentanoate + tRNA(Glu) + NADP(+) = L-glutamyl-tRNA(Glu) + NADPH + H(+). It functions in the pathway porphyrin-containing compound metabolism; protoporphyrin-IX biosynthesis; 5-aminolevulinate from L-glutamyl-tRNA(Glu): step 1/2. Functionally, catalyzes the NADPH-dependent reduction of glutamyl-tRNA(Glu) to glutamate 1-semialdehyde (GSA). The protein is Glutamyl-tRNA reductase of Escherichia coli O45:K1 (strain S88 / ExPEC).